We begin with the raw amino-acid sequence, 117 residues long: Large ribosomal subunit protein uL18 (117 aa).

The protein belongs to the universal ribosomal protein uL18 family. As to quaternary structure, part of the 50S ribosomal subunit; part of the 5S rRNA/L5/L18/L25 subcomplex. Contacts the 5S and 23S rRNAs.

Its function is as follows. This is one of the proteins that bind and probably mediate the attachment of the 5S RNA into the large ribosomal subunit, where it forms part of the central protuberance. The sequence is that of Large ribosomal subunit protein uL18 from Idiomarina loihiensis (strain ATCC BAA-735 / DSM 15497 / L2-TR).